A 279-amino-acid chain; its full sequence is Indole-3-glycerol phosphate synthase (279 aa).

The protein belongs to the TrpC family.

The catalysed reaction is 1-(2-carboxyphenylamino)-1-deoxy-D-ribulose 5-phosphate + H(+) = (1S,2R)-1-C-(indol-3-yl)glycerol 3-phosphate + CO2 + H2O. It functions in the pathway amino-acid biosynthesis; L-tryptophan biosynthesis; L-tryptophan from chorismate: step 4/5. The polypeptide is Indole-3-glycerol phosphate synthase (Ectopseudomonas mendocina (strain ymp) (Pseudomonas mendocina)).